A 114-amino-acid polypeptide reads, in one-letter code: MRVKKGYKARRRRNRVLKLAKGFRGRRKNCYRRANQAVERALDYATRDRRQKRRDFRALWIVRINAAARQNGTTYSRLLAGLKKAGVAIDRKILADLALALPGDFAAVVKAAKA.

The protein belongs to the bacterial ribosomal protein bL20 family.

In terms of biological role, binds directly to 23S ribosomal RNA and is necessary for the in vitro assembly process of the 50S ribosomal subunit. It is not involved in the protein synthesizing functions of that subunit. In Anaeromyxobacter sp. (strain Fw109-5), this protein is Large ribosomal subunit protein bL20.